A 252-amino-acid polypeptide reads, in one-letter code: MGQKTNPNGLRLGIIRTWESQWCVNDKEIPNLIKEDFLIRKLINNFTKKSAISQIDIERLKEKNKNRITISVHTAKPGVIIGKDGDTRNKLVAKLKELTQKDVNLNVLEVKNSDKIALLIAQNMAEQLENRMFFRRVQKMAIQKALKAGAKGVKTLISGRLGGAEIARSEGHAEGRVPLHTLRADIDYAAVEAHTTYGVLGIKVWIFHGEVLPGQTILDTRKPFASQSSNTPNRRPRNFKGGNNNHVNAKKN.

In terms of domain architecture, KH type-2 spans 39–111 (IRKLINNFTK…DVNLNVLEVK (73 aa)). Positions 222 to 252 (KPFASQSSNTPNRRPRNFKGGNNNHVNAKKN) are disordered. A compositionally biased stretch (polar residues) spans 241 to 252 (GGNNNHVNAKKN).

This sequence belongs to the universal ribosomal protein uS3 family. In terms of assembly, part of the 30S ribosomal subunit. Forms a tight complex with proteins S10 and S14.

Its function is as follows. Binds the lower part of the 30S subunit head. Binds mRNA in the 70S ribosome, positioning it for translation. This chain is Small ribosomal subunit protein uS3, found in Onion yellows phytoplasma (strain OY-M).